A 573-amino-acid chain; its full sequence is Protein FAM200A (573 aa).

Residues 1–51 (MTPESRDTTDLSPRGTQEMEGIVVVKVEEEDEEDHFQKQRNKVESSPQVLS) are disordered. Residues 1 to 513 (MTPESRDTTD…DEFPLLSRKS (513 aa)) lie on the Extracellular side of the membrane. Residues 514–533 (ISLLLPFTTTYLCELGFSIL) traverse the membrane as a helical segment. The Cytoplasmic segment spans residues 534–573 (TRLKTKKRNRLNSAPDMRVALSSCVPDWKELMNRQAHPSH).

This sequence belongs to the FAM200 family.

It localises to the membrane. The polypeptide is Protein FAM200A (FAM200A) (Macaca fascicularis (Crab-eating macaque)).